Reading from the N-terminus, the 164-residue chain is 3-hydroxyacyl-[acyl-carrier-protein] dehydratase FabZ (164 aa).

Residue histidine 61 is part of the active site.

The protein belongs to the thioester dehydratase family. FabZ subfamily.

Its subcellular location is the cytoplasm. It carries out the reaction a (3R)-hydroxyacyl-[ACP] = a (2E)-enoyl-[ACP] + H2O. Functionally, involved in unsaturated fatty acids biosynthesis. Catalyzes the dehydration of short chain beta-hydroxyacyl-ACPs and long chain saturated and unsaturated beta-hydroxyacyl-ACPs. The protein is 3-hydroxyacyl-[acyl-carrier-protein] dehydratase FabZ of Ralstonia nicotianae (strain ATCC BAA-1114 / GMI1000) (Ralstonia solanacearum).